Reading from the N-terminus, the 999-residue chain is Sarcoplasmic/endoplasmic reticulum calcium ATPase 3 (999 aa).

Met1 carries the N-acetylmethionine modification. The Cytoplasmic segment spans residues 1–48; the sequence is MEEAHLLPAADVLRRFSVTAEGGLSPAQVTRARERYGPNELPTEEGKS. Ser17 is subject to Phosphoserine. Thr19 carries the phosphothreonine modification. The residue at position 25 (Ser25) is a Phosphoserine. A helical membrane pass occupies residues 49–69; sequence LWELVLEQFEDLLVRILLLAA. Topologically, residues 70–89 are extracellular; that stretch reads LVSFVLACFEEGEETTTAFV. Residues 90 to 110 form a helical membrane-spanning segment; it reads EPLVIVLILVANAVVGVWQER. Residues 111–253 lie on the Cytoplasmic side of the membrane; that stretch reads NAENAIEALK…PERTPLQQKL (143 aa). Residues 254–273 traverse the membrane as a helical segment; sequence DEFGRQLSRAISVICMAVWV. The Extracellular portion of the chain corresponds to 274–295; sequence INIGHFADPAHGGSWLRGAVYY. A helical transmembrane segment spans residues 296–313; sequence FKIAVALAVAAIPEGLPA. Ca(2+)-binding residues include Val304, Ala305, Ile307, and Glu309. The Cytoplasmic segment spans residues 314-757; the sequence is VITTCLALGT…EEGRAIYSNM (444 aa). Asp351 (4-aspartylphosphate intermediate) is an active-site residue. Positions 351 and 353 each coordinate Mg(2+). An ATP-binding site is contributed by Thr353. The tract at residues 370–400 is interaction with phospholamban 1; that stretch reads AEAEAGTCRLHEFTISGTTYAPEGEVRQGEQ. Thr415 carries the post-translational modification Phosphothreonine. Positions 442, 489, 515, 560, 625, 626, and 627 each coordinate ATP. The residue at position 662 (Ser662) is a Phosphoserine. ATP is bound by residues Arg678 and Lys684. Residue Asp703 participates in Mg(2+) binding. Asn706 serves as a coordination point for ATP. The chain crosses the membrane as a helical span at residues 758 to 777; the sequence is KQFIRYLISSNVGEVVCIFL. The Ca(2+) site is built by Asn768 and Glu771. Topologically, residues 778-787 are extracellular; that stretch reads TAILGLPEAL. Residues 788–808 traverse the membrane as a helical segment; the sequence is IPVQLLWVNLVTDGLPATALG. The interval 788–808 is interaction with phospholamban 2; the sequence is IPVQLLWVNLVTDGLPATALG. Ca(2+)-binding residues include Asn796, Thr799, and Asp800. Topologically, residues 809–828 are cytoplasmic; sequence FNPPDLDIMEKRPRNPREAL. The chain crosses the membrane as a helical span at residues 829 to 851; that stretch reads ISGWLFFRYLAIGVYVGLATVAA. Over 852–897 the chain is Extracellular; that stretch reads ATWWFLYDAEGPQVTFYQLRNFLKCSEDNPLFTGTDCEVFESRFPT. A disulfide bridge links Cys876 with Cys888. The helical transmembrane segment at 898-917 threads the bilayer; it reads TMALSVLVTTEMCNALNSVS. Glu908 provides a ligand contact to Ca(2+). At 918–930 the chain is on the cytoplasmic side; that stretch reads ENQSLLRMPPWLN. The helical transmembrane segment at 931–949 threads the bilayer; that stretch reads PWLLAAVAMSMALHFLILL. The Extracellular segment spans residues 950–964; it reads VPPLPLIFQVTPLSG. The helical transmembrane segment at 965 to 985 threads the bilayer; it reads RQWVVVLQISLPVILLDEALK. Residues 986 to 999 are Cytoplasmic-facing; sequence YLSRKHVDEEKGRQ.

The protein belongs to the cation transport ATPase (P-type) (TC 3.A.3) family. Type IIA subfamily. Interacts with sarcolipin (SLN). Interacts with phospholamban (PLN). Interacts with myoregulin (MRLN). Interacts with DWORF. Interacts with VMP1. Interacts with TUNAR; the interaction occurs at low levels in low glucose conditions and is increased by high glucose levels. It depends on Mg(2+) as a cofactor. Expressed in endothelial tissues.

It is found in the endoplasmic reticulum membrane. Its subcellular location is the sarcoplasmic reticulum membrane. It catalyses the reaction Ca(2+)(in) + ATP + H2O = Ca(2+)(out) + ADP + phosphate + H(+). Inhibited by sarcolipin (SLN), phospholamban (PLN) and myoregulin (MRLN). Enhanced by DWORF; DWORF increases activity by displacing sarcolipin (SLN), phospholamban (PLN) and myoregulin (MRLN). In terms of biological role, this magnesium-dependent enzyme catalyzes the hydrolysis of ATP coupled with the transport of calcium. Transports calcium ions from the cytosol into the sarcoplasmic/endoplasmic reticulum lumen. Contributes to calcium sequestration involved in muscular excitation/contraction. The polypeptide is Sarcoplasmic/endoplasmic reticulum calcium ATPase 3 (ATP2A3) (Sus scrofa (Pig)).